The sequence spans 340 residues: Beta-1,3-N-acetylglucosaminyltransferase radical fringe (340 aa).

The Cytoplasmic segment spans residues 1–4; it reads MKIT. The helical; Signal-anchor for type II membrane protein transmembrane segment at 5–25 threads the bilayer; sequence YVGLIKVCFLVFLLLCATVLL. The Lumenal segment spans residues 26–340; it reads NISWRQRDSS…AFSLAEDPTR (315 aa). A glycan (N-linked (GlcNAc...) asparagine) is linked at N42. Substrate is bound at residue R110. N149 is a glycosylation site (N-linked (GlcNAc...) asparagine). Intrachain disulfides connect C150–C161 and C179–C242. Position 183 (D183) interacts with substrate. D184 is a binding site for Mn(2+). The active site involves D272. Residue H296 participates in Mn(2+) binding.

This sequence belongs to the glycosyltransferase 31 family. Mn(2+) serves as cofactor.

It is found in the golgi apparatus membrane. The catalysed reaction is 3-O-(alpha-L-fucosyl)-L-threonyl-[EGF-like domain protein] + UDP-N-acetyl-alpha-D-glucosamine = 3-O-(N-acetyl-beta-D-glucosaminyl-(1-&gt;3)-alpha-L-fucosyl)-L-threonyl-[EGF-like domain protein] + UDP + H(+). It carries out the reaction 3-O-(alpha-L-fucosyl)-L-seryl-[EGF-like domain protein] + UDP-N-acetyl-alpha-D-glucosamine = 3-O-(N-acetyl-beta-D-glucosaminyl-(1-&gt;3)-alpha-L-fucosyl)-L-seryl-[EGF-like domain protein] + UDP + H(+). Glycosyltransferase that initiates the elongation of O-linked fucose residues attached to EGF-like repeats in the extracellular domain of Notch molecules. In Xenopus laevis (African clawed frog), this protein is Beta-1,3-N-acetylglucosaminyltransferase radical fringe (rfng).